The following is a 352-amino-acid chain: MLELNFSQTLGNHCLTINETLPANGITAIFGVSGAGKTSLINAISGLTRPQKGRIVLNGRVLNDAEKGICLTPEKRRVGYVFQDARLFPHYKVRGNLRYGMSKSMVDQFDKLVALLGIEPLLDRLPGSLSGGEKQRVAIGRALLTAPELLLLDEPLASLDIPRKRELLPYLQRLTREINIPMLYVSHSLDEILHLADRVMVLENGQVKAFGALEEVWGSSVMNPWLPKEQQSSILKVTVLEHHPHYAMTALALGDQHLWVNKLGEPLQAALRIRIQASDVSLVLQPPQQTSIRNVLRAKVVNSYDDNGQVEVELEVGGKTLWARISPWARDELAIKPGLWLYAQIKSVSITA.

Residues 1–229 (MLELNFSQTL…SVMNPWLPKE (229 aa)) form the ABC transporter domain. Residue 31 to 38 (GVSGAGKT) participates in ATP binding. The 64-residue stretch at 289–352 (QTSIRNVLRA…AQIKSVSITA (64 aa)) folds into the Mop domain.

Belongs to the ABC transporter superfamily. Molybdate importer (TC 3.A.1.8) family. In terms of assembly, the complex is composed of two ATP-binding proteins (ModC), two transmembrane proteins (ModB) and a solute-binding protein (ModA).

It is found in the cell inner membrane. It catalyses the reaction molybdate(out) + ATP + H2O = molybdate(in) + ADP + phosphate + H(+). Part of the ABC transporter complex ModABC involved in molybdenum import. Responsible for energy coupling to the transport system. The polypeptide is Molybdenum import ATP-binding protein ModC (Shigella flexneri).